We begin with the raw amino-acid sequence, 866 residues long: FHIP family protein v1g243165 (866 aa).

Disordered regions lie at residues 739-761 (RDGP…ASTS) and 781-814 (GSTA…ESQT). Positions 751-761 (SIGSIGSASTS) are enriched in low complexity.

The protein belongs to the FHIP family.

The protein is FHIP family protein v1g243165 of Nematostella vectensis (Starlet sea anemone).